We begin with the raw amino-acid sequence, 384 residues long: dTDP-dihydrostreptose--streptidine-6-phosphate dihydrostreptosyltransferase (384 aa).

It catalyses the reaction dTDP-L-dihydrostreptose + streptidine 6-phosphate = O-(1-&gt;4)-alpha-L-dihydrostreptosyl-streptidine 6-phosphate + dTDP + H(+). It functions in the pathway antibiotic biosynthesis; streptomycin biosynthesis. In terms of biological role, is probably a dihydrostreptosyl glycosyltransferase, involved in the first glycosylation step condensing streptidine-6-phosphate and dihydrostreptose. The chain is dTDP-dihydrostreptose--streptidine-6-phosphate dihydrostreptosyltransferase (strH) from Streptomyces griseus.